We begin with the raw amino-acid sequence, 388 residues long: Homoserine O-acetyltransferase (388 aa).

The AB hydrolase-1 domain occupies 55–354 (PIVLIEHALT…PTGHDGFLIE (300 aa)). The Nucleophile role is filled by serine 150. Arginine 220 lines the substrate pocket. Active-site residues include aspartate 318 and histidine 348. Position 349 (aspartate 349) interacts with substrate.

Belongs to the AB hydrolase superfamily. MetX family. In terms of assembly, homodimer.

The protein localises to the cytoplasm. The catalysed reaction is L-homoserine + acetyl-CoA = O-acetyl-L-homoserine + CoA. The protein operates within amino-acid biosynthesis; L-methionine biosynthesis via de novo pathway; O-acetyl-L-homoserine from L-homoserine: step 1/1. Transfers an acetyl group from acetyl-CoA to L-homoserine, forming acetyl-L-homoserine. The protein is Homoserine O-acetyltransferase of Corynebacterium urealyticum (strain ATCC 43042 / DSM 7109).